We begin with the raw amino-acid sequence, 224 residues long: UPF0758 protein VS_0182 (224 aa).

Residues 1–21 form a disordered region; the sequence is MPISKMPVESMPREKLLSRGP. An MPN domain is found at 102 to 224; that stretch reads ALTSPSHTKL…VISFAERGWI (123 aa). Zn(2+)-binding residues include His-173, His-175, and Asp-186. Residues 173 to 186 carry the JAMM motif motif; sequence HNHPSGVAEPSQAD.

The protein belongs to the UPF0758 family.

This chain is UPF0758 protein VS_0182, found in Vibrio atlanticus (strain LGP32) (Vibrio splendidus (strain Mel32)).